A 92-amino-acid chain; its full sequence is Transcription factor ILI6 (92 aa).

The disordered stretch occupies residues 1–20; the sequence is MSSRRSRSRQSGSSRITDEQ. A bHLH domain is found at 5 to 59; that stretch reads RSRSRQSGSSRITDEQISDLVSKLQDLLPEARLRSNDRVPSSRVLQETCNYIRSL.

The protein belongs to the bHLH protein family. As to quaternary structure, interacts with APG.

The protein resides in the nucleus. In terms of biological role, atypical and probable non DNA-binding bHLH transcription factor that acts as a positive regulator of grain size. Binds the transcription repressor APG and forms a heterodimer of antagonistic bHLH transcription factors that regulates grain length and weight by controlling cell elongation in lemma and palea. May be involved in the control of lamina inclination through brassinosteroid signaling pathway. In Oryza sativa subsp. indica (Rice), this protein is Transcription factor ILI6 (ILI6).